Here is a 637-residue protein sequence, read N- to C-terminus: Chaperone protein HtpG (637 aa).

Residues 1–345 form an a; substrate-binding region; sequence MSQQETHGFQ…SNDLPLNVSR (345 aa). The b stretch occupies residues 346-562; the sequence is EILQDNQVTT…EGEMSTQMIK (217 aa). The tract at residues 563–637 is c; the sequence is LMQAAGQPVP…TNQMLLASVK (75 aa).

The protein belongs to the heat shock protein 90 family. Homodimer.

It is found in the cytoplasm. Its function is as follows. Molecular chaperone. Has ATPase activity. This is Chaperone protein HtpG from Shewanella frigidimarina (strain NCIMB 400).